The sequence spans 53 residues: Ferredoxin B (53 aa).

The N-terminal extension stretch occupies residues 1-35 (GIDPNYRSLPVVKEEQGVKIYGTYEPPTKLGIWGT). An N6-methyllysine modification is found at Lys29. The region spanning 34-53 (GTIVGVDFDLCIADGSCINA) is the 4Fe-4S ferredoxin-type 1 domain. Cys44 and Cys50 together coordinate [3Fe-4S] cluster.

The cofactor is [3Fe-4S] cluster. [4Fe-4S] cluster is required as a cofactor.

Its function is as follows. Ferredoxins are iron-sulfur proteins that transfer electrons in a wide variety of metabolic reactions. The polypeptide is Ferredoxin B (Sulfuracidifex metallicus (Sulfolobus metallicus)).